We begin with the raw amino-acid sequence, 151 residues long: Probable cGMP 3',5'-cyclic phosphodiesterase subunit delta (151 aa).

This sequence belongs to the PDE6D/unc-119 family. Interacts with Pde6.

It is found in the nucleus. It localises to the cytoplasm. This chain is Probable cGMP 3',5'-cyclic phosphodiesterase subunit delta, found in Drosophila willistoni (Fruit fly).